A 403-amino-acid chain; its full sequence is PP2A regulatory subunit TAP46 (403 aa).

2 disordered regions span residues 158 to 184 and 351 to 403; these read ERRG…LDDD and ANSS…TPCG. Acidic residues-rich tracts occupy residues 174 to 184 and 366 to 375; these read ETEEDDVLDDD and EDDEEDDDDA. Residues 376 to 391 show a composition bias toward basic and acidic residues; the sequence is AQDKARAWDDWKDDNP.

The protein belongs to the IGBP1/TAP42 family. As to quaternary structure, interacts with NPP4 and NPP5, two catalytic subunits (subunit C) of PP2A.

The protein resides in the cytoplasm. The protein localises to the nucleus. In terms of biological role, involved in the regulation of the TOR signaling pathway. Seems to act as a regulator of PP2A catalytic activity. This chain is PP2A regulatory subunit TAP46, found in Nicotiana benthamiana.